The following is a 378-amino-acid chain: UDP-N-acetylglucosamine--N-acetylmuramyl-(pentapeptide) pyrophosphoryl-undecaprenol N-acetylglucosamine transferase (378 aa).

Residues 14–16, Asn-125, Arg-165, Ser-193, and Gln-293 contribute to the UDP-N-acetyl-alpha-D-glucosamine site; that span reads TGG.

Belongs to the glycosyltransferase 28 family. MurG subfamily.

The protein resides in the cell inner membrane. The catalysed reaction is di-trans,octa-cis-undecaprenyl diphospho-N-acetyl-alpha-D-muramoyl-L-alanyl-D-glutamyl-meso-2,6-diaminopimeloyl-D-alanyl-D-alanine + UDP-N-acetyl-alpha-D-glucosamine = di-trans,octa-cis-undecaprenyl diphospho-[N-acetyl-alpha-D-glucosaminyl-(1-&gt;4)]-N-acetyl-alpha-D-muramoyl-L-alanyl-D-glutamyl-meso-2,6-diaminopimeloyl-D-alanyl-D-alanine + UDP + H(+). It functions in the pathway cell wall biogenesis; peptidoglycan biosynthesis. In terms of biological role, cell wall formation. Catalyzes the transfer of a GlcNAc subunit on undecaprenyl-pyrophosphoryl-MurNAc-pentapeptide (lipid intermediate I) to form undecaprenyl-pyrophosphoryl-MurNAc-(pentapeptide)GlcNAc (lipid intermediate II). In Bartonella henselae (strain ATCC 49882 / DSM 28221 / CCUG 30454 / Houston 1) (Rochalimaea henselae), this protein is UDP-N-acetylglucosamine--N-acetylmuramyl-(pentapeptide) pyrophosphoryl-undecaprenol N-acetylglucosamine transferase.